The following is a 141-amino-acid chain: MDSRICTSFARLMASALCVSTLLVTAMPFDLRRGSSDTDLDLQGHVDLGLDDLDKLRLIFPPGLIEEAFSQAQGKVDMPLPRQRTSSRSSERWAPKSKRFDFGFAGLDTYDAIHRALEQPARGTSNSGSGYNMLMKMQRHG.

Positions 1–26 (MDSRICTSFARLMASALCVSTLLVTA) are cleaved as a signal peptide. The disordered stretch occupies residues 75 to 94 (KVDMPLPRQRTSSRSSERWA). His-140 is subject to Histidine amide.

As to expression, neurons.

The protein resides in the secreted. Functionally, mediates intrinsic neuromodulation. This Aplysia californica (California sea hare) protein is Neuropeptides CP2 (CP2PP).